The sequence spans 147 residues: Microsomal glutathione S-transferase 2 (147 aa).

The next 3 helical transmembrane spans lie at 6 to 26 (ILLAAVSILSACQQSYFALQV), 59 to 79 (FYPIFIITLWMAGWYFNQVFA), and 111 to 131 (SLGILALLTLLGALGIANSFL).

The protein belongs to the MAPEG family. In terms of assembly, homotrimer. As to expression, liver, spleen, skeletal muscle, heart, adrenals, pancreas, prostate, testis, fetal liver, and fetal spleen. Very low expression in lung, brain, placenta and bone marrow. Abundantly expressed in human umbilical vein endothelial cells (at protein level).

Its subcellular location is the endoplasmic reticulum membrane. The protein localises to the microsome membrane. The enzyme catalyses RX + glutathione = an S-substituted glutathione + a halide anion + H(+). It catalyses the reaction 1-chloro-2,4-dinitrobenzene + glutathione = 2,4-dinitrophenyl-S-glutathione + chloride + H(+). It carries out the reaction leukotriene C4 = leukotriene A4 + glutathione. The catalysed reaction is (5S)-hydroperoxy-(6E,8Z,11Z,14Z)-eicosatetraenoate + 2 glutathione = (5S)-hydroxy-(6E,8Z,11Z,14Z)-eicosatetraenoate + glutathione disulfide + H2O. With respect to regulation, each monomer can bind on GSH molecule but only one subunit is catalytically active. In terms of biological role, catalyzes several different glutathione-dependent reactions. Catalyzes the glutathione-dependent reduction of lipid hydroperoxides, such as 5-HPETE. Has glutathione transferase activity, toward xenobiotic electrophiles, such as 1-chloro-2, 4-dinitrobenzene (CDNB). Also catalyzes the conjugation of leukotriene A4 with reduced glutathione to form leukotriene C4 (LTC4). Involved in oxidative DNA damage induced by ER stress and anticancer agents by activating LTC4 biosynthetic machinery in nonimmune cells. The polypeptide is Microsomal glutathione S-transferase 2 (MGST2) (Homo sapiens (Human)).